A 640-amino-acid polypeptide reads, in one-letter code: EF-hand domain-containing protein 1 (640 aa).

The tract at residues 1-45 (MVSNPVHGLPFLPGTSFKDSTKTAFHRSQTLSYRNGYAIVRRPTV) is required for its localization in the mitotic spindle and interaction with alpha-tubulin. DM10 domains follow at residues 93–198 (DKKV…ESQG), 239–359 (DKQV…KEKF), and 416–520 (DNKV…ESNA). A disordered region spans residues 535-554 (VRKREAPAPEAESKQTEKDP). Residues 538 to 554 (REAPAPEAESKQTEKDP) show a composition bias toward basic and acidic residues. The region spanning 574–609 (SCKDNIREAFQIYDKEASGYVDRDMFFKICESLNVP) is the EF-hand domain.

Microtubule inner protein component of sperm flagellar doublet microtubules. Interacts with the C-terminus of CACNA1E. Interacts with alpha-tubulin. In terms of tissue distribution, widely expressed. Not detected in lymphocytes.

It is found in the cytoplasm. It localises to the cytoskeleton. The protein resides in the cilium axoneme. The protein localises to the flagellum axoneme. Its subcellular location is the microtubule organizing center. It is found in the centrosome. It localises to the spindle. The protein resides in the spindle pole. Functionally, microtubule inner protein (MIP) part of the dynein-decorated doublet microtubules (DMTs) in cilia axoneme, which is required for motile cilia beating. Microtubule-associated protein which regulates cell division and neuronal migration during cortical development. Necessary for radial and tangential cell migration during brain development, possibly acting as a regulator of cell morphology and process formation during migration. May enhance calcium influx through CACNA1E and stimulate programmed cell death. The protein is EF-hand domain-containing protein 1 of Homo sapiens (Human).